The following is a 65-amino-acid chain: Large ribosomal subunit protein uL29 (65 aa).

Belongs to the universal ribosomal protein uL29 family.

This is Large ribosomal subunit protein uL29 (rpmC) from Borreliella burgdorferi (strain ATCC 35210 / DSM 4680 / CIP 102532 / B31) (Borrelia burgdorferi).